A 2185-amino-acid chain; its full sequence is Genome polyprotein (2185 aa).

The N-myristoyl glycine; by host moiety is linked to residue Gly2. Residues 2–1495 (GAQVSTQKTG…HVSRAFICLQ (1494 aa)) lie on the Cytoplasmic side of the membrane. The amphipathic alpha-helix stretch occupies residues 568–584 (FFQGPVEDAITAAIGRV). Active-site for protease 2A activity residues include His872 and Asp890. Zn(2+) contacts are provided by Cys907 and Cys909. The active-site For protease 2A activity is Cys961. Positions 967 and 969 each coordinate Zn(2+). The interval 1101-1173 (NNSWLKKFTE…EQSAPSQSDQ (73 aa)) is membrane-binding. Residues 1101-1239 (NNSWLKKFTE…SPGAGKSVAT (139 aa)) are oligomerization. Residues 1122–1126 (AVKIQ) form an RNA-binding region. Positions 1205–1361 (EKKMSNYIQF…SMYSQNGKIN (157 aa)) constitute an SF3 helicase domain. The Zn(2+) site is built by Cys1369, Cys1381, and Cys1386. The C4-type; degenerate zinc-finger motif lies at 1369 to 1386 (CDDECCPVNFKKCCPLVC). Residues 1413–1420 (EYNHRHSV) are RNA-binding. The interval 1424-1429 (LEALFQ) is oligomerization. An intramembrane segment occupies 1496–1511 (ALTTFVSVAGIIYIIY). The Cytoplasmic segment spans residues 1512–2185 (KLFAGFQGAY…TLRRKWLDSF (674 aa)). Tyr1521 is subject to O-(5'-phospho-RNA)-tyrosine. The Peptidase C3 domain occupies 1541–1719 (GPAFEFAVAM…FSAALLKHYF (179 aa)). Residues His1580, Glu1611, and Cys1687 each act as for protease 3C activity in the active site. In terms of domain architecture, RdRp catalytic spans 1950 to 2066 (GHLIAFDYSG…SYPWPIDASL (117 aa)). Mg(2+) is bound by residues Asp1956 and Asp2052.

Belongs to the picornaviruses polyprotein family. Interacts with capsid protein VP1 and capsid protein VP3 to form heterotrimeric protomers. In terms of assembly, interacts with capsid protein VP0, and capsid protein VP3 to form heterotrimeric protomers. Five protomers subsequently associate to form pentamers which serve as building blocks for the capsid. Interacts with capsid protein VP2, capsid protein VP3 and capsid protein VP4 following cleavage of capsid protein VP0. Interacts with host CD55. Interacts with host CXADR. As to quaternary structure, interacts with capsid protein VP1 and capsid protein VP3 in the mature capsid. Interacts with capsid protein VP0 and capsid protein VP1 to form heterotrimeric protomers. Five protomers subsequently associate to form pentamers which serve as building blocks for the capsid. Interacts with capsid protein VP4 in the mature capsid. Interacts with protein 2C; this interaction may be important for virion morphogenesis. In terms of assembly, interacts with capsid protein VP1 and capsid protein VP3. As to quaternary structure, homodimer. Homohexamer; forms a hexameric ring structure with 6-fold symmetry characteristic of AAA+ ATPases. Interacts (via N-terminus) with host RTN3 (via reticulon domain); this interaction is important for viral replication. Interacts with capsid protein VP3; this interaction may be important for virion morphogenesis. In terms of assembly, interacts with protein 3CD. As to quaternary structure, homodimer. Interacts with host GBF1. Interacts (via GOLD domain) with host ACBD3 (via GOLD domain); this interaction allows the formation of a viral protein 3A/ACBD3 heterotetramer with a 2:2 stoichiometry, which will stimulate the recruitment of host PI4KB in order to synthesize PI4P at the viral RNA replication sites. Interacts with RNA-directed RNA polymerase. In terms of assembly, interacts with host TICAM1 (via C-terminus). As to quaternary structure, interacts with protein 3AB and with RNA-directed RNA polymerase. Interacts with Viral protein genome-linked and with protein 3CD. Mg(2+) serves as cofactor. Post-translationally, specific enzymatic cleavages in vivo by the viral proteases yield processing intermediates and the mature proteins. Myristoylation is required for the formation of pentamers during virus assembly. Further assembly of 12 pentamers and a molecule of genomic RNA generates the provirion. In terms of processing, during virion maturation, immature virions are rendered infectious following cleavage of VP0 into VP4 and VP2. This maturation seems to be an autocatalytic event triggered by the presence of RNA in the capsid and it is followed by a conformational change infectious virion. Post-translationally, myristoylation is required during RNA encapsidation and formation of the mature virus particle. VPg is uridylylated by the polymerase into VPg-pUpU. This acts as a nucleotide-peptide primer for the genomic RNA replication.

Its subcellular location is the virion. The protein resides in the host cytoplasm. It localises to the host cytoplasmic vesicle membrane. The protein localises to the host nucleus. The enzyme catalyses a ribonucleoside 5'-triphosphate + H2O = a ribonucleoside 5'-diphosphate + phosphate + H(+). The catalysed reaction is Selective cleavage of Tyr-|-Gly bond in the picornavirus polyprotein.. It catalyses the reaction RNA(n) + a ribonucleoside 5'-triphosphate = RNA(n+1) + diphosphate. It carries out the reaction Selective cleavage of Gln-|-Gly bond in the poliovirus polyprotein. In other picornavirus reactions Glu may be substituted for Gln, and Ser or Thr for Gly.. Its activity is regulated as follows. Replication or transcription is subject to high level of random mutations by the nucleotide analog ribavirin. In terms of biological role, forms an icosahedral capsid of pseudo T=3 symmetry with capsid proteins VP2 and VP3. The capsid is 300 Angstroms in diameter, composed of 60 copies of each capsid protein and enclosing the viral positive strand RNA genome. Capsid protein VP1 mainly forms the vertices of the capsid. Capsid protein VP1 interacts with host CD55 and CXADR to provide virion attachment to target host cells. This attachment induces virion internalization. Tyrosine kinases are probably involved in the entry process. After binding to its receptor, the capsid undergoes conformational changes. Capsid protein VP1 N-terminus (that contains an amphipathic alpha-helix) and capsid protein VP4 are externalized. Together, they shape a pore in the host membrane through which viral genome is translocated to host cell cytoplasm. Functionally, forms an icosahedral capsid of pseudo T=3 symmetry with capsid proteins VP2 and VP3. The capsid is 300 Angstroms in diameter, composed of 60 copies of each capsid protein and enclosing the viral positive strand RNA genome. Lies on the inner surface of the capsid shell. After binding to the host receptor, the capsid undergoes conformational changes. Capsid protein VP4 is released, Capsid protein VP1 N-terminus is externalized, and together, they shape a pore in the host membrane through which the viral genome is translocated into the host cell cytoplasm. Its function is as follows. Component of immature procapsids, which is cleaved into capsid proteins VP4 and VP2 after maturation. Allows the capsid to remain inactive before the maturation step. In terms of biological role, cysteine protease that cleaves viral polyprotein and specific host proteins. It is responsible for the autocatalytic cleavage between the P1 and P2 regions, which is the first cleavage occurring in the polyprotein. Also cleaves the host translation initiation factor EIF4G1, in order to shut down the capped cellular mRNA translation. Inhibits the host nucleus-cytoplasm protein and RNA trafficking by cleaving host members of the nuclear pores. Counteracts stress granule formation probably by antagonizing its assembly or promoting its dissassembly. Cleaves and inhibits host IFIH1/MDA5, thereby inhibiting the type-I IFN production and the establishment of the antiviral state. Cleaves and inhibits host MAVS, thereby inhibiting the type-I IFN production and the establishment of the antiviral state. Functionally, plays an essential role in the virus replication cycle by acting as a viroporin. Creates a pore in the host endoplasmic reticulum and as a consequence releases Ca2+ in the cytoplasm of infected cell. In turn, high levels of cytoplasmic calcium may trigger membrane trafficking and transport of viral ER-associated proteins to viroplasms, sites of viral genome replication. Induces and associates with structural rearrangements of intracellular membranes. Displays RNA-binding, nucleotide binding and NTPase activities. May play a role in virion morphogenesis and viral RNA encapsidation by interacting with the capsid protein VP3. Its function is as follows. Localizes the viral replication complex to the surface of membranous vesicles. Together with protein 3CD binds the Cis-Active RNA Element (CRE) which is involved in RNA synthesis initiation. Acts as a cofactor to stimulate the activity of 3D polymerase, maybe through a nucleid acid chaperone activity. In terms of biological role, localizes the viral replication complex to the surface of membranous vesicles. It inhibits host cell endoplasmic reticulum-to-Golgi apparatus transport and causes the disassembly of the Golgi complex, possibly through GBF1 interaction. This would result in depletion of MHC, trail receptors and IFN receptors at the host cell surface. Plays an essential role in viral RNA replication by recruiting ACBD3 and PI4KB at the viral replication sites, thereby allowing the formation of the rearranged membranous structures where viral replication takes place. Functionally, acts as a primer for viral RNA replication and remains covalently bound to viral genomic RNA. VPg is uridylylated prior to priming replication into VPg-pUpU. The oriI viral genomic sequence may act as a template for this. The VPg-pUpU is then used as primer on the genomic RNA poly(A) by the RNA-dependent RNA polymerase to replicate the viral genome. During genome replication, the VPg-RNA linkage is removed by the host TDP2, thereby accelerating replication. During the late stage of the replication cycle, host TDP2 is excluded from sites of viral RNA synthesis and encapsidation, allowing for the generation of progeny virions. Involved in the viral replication complex and viral polypeptide maturation. It exhibits protease activity with a specificity and catalytic efficiency that is different from protease 3C. Protein 3CD lacks polymerase activity. Protein 3CD binds to the 5'UTR of the viral genome. Its function is as follows. Major viral protease that mediates proteolytic processing of the polyprotein. Cleaves host EIF5B, contributing to host translation shutoff. Cleaves also host PABPC1, contributing to host translation shutoff. Cleaves and inhibits host RIGI, thereby inhibiting the type-I IFN production and the establishment of the antiviral state. Cleaves and inhibits host MAVS, thereby inhibiting the type-I IFN production and the establishment of the antiviral state. Cleaves and inhibits host TICAM1/TRIF, thereby inhibiting the type-I IFN production. Cleaves host NLRP1, triggers host N-glycine-mediated degradation of the autoinhibitory NLRP1 N-terminal fragment. Cleaves host transcription factor TFEB, thereby disrupting host lysosomal functions and enhancing viral infection. In terms of biological role, replicates the viral genomic RNA on the surface of intracellular membranes. May form linear arrays of subunits that propagate along a strong head-to-tail interaction called interface-I. Covalently attaches UMP to a tyrosine of VPg, which is used to prime RNA synthesis. The positive stranded RNA genome is first replicated at virus induced membranous vesicles, creating a dsRNA genomic replication form. This dsRNA is then used as template to synthesize positive stranded RNA genomes. ss(+)RNA genomes are either translated, replicated or encapsidated. In Coxsackievirus B3 (strain Nancy), this protein is Genome polyprotein.